The sequence spans 147 residues: Hemoglobin subunit beta (147 aa).

At Val2 the chain carries N-acetylvaline. In terms of domain architecture, Globin spans 3–147 (HLADDEKAAV…VSTALAHKYH (145 aa)). The residue at position 45 (Ser45) is a Phosphoserine. Lys60 is subject to N6-acetyllysine. Heme b is bound at residue His64. Lys83 is modified (N6-acetyllysine). Residue His93 coordinates heme b. Position 94 is an S-nitrosocysteine (Cys94). Lys145 bears the N6-acetyllysine mark.

Belongs to the globin family. In terms of assembly, heterotetramer of two alpha chains and two beta chains. In terms of tissue distribution, red blood cells.

In terms of biological role, involved in oxygen transport from the lung to the various peripheral tissues. In Bradypus tridactylus (Pale-throated three-toed sloth), this protein is Hemoglobin subunit beta (HBB).